The sequence spans 290 residues: Inositol monophosphatase 2 (290 aa).

The Mg(2+) site is built by E83, D103, I105, and D106. Residue E83 participates in substrate binding. Residues I105–T108, G207–S209, Q226, and D233 each bind substrate. D233 is a Mg(2+) binding site.

Belongs to the inositol monophosphatase superfamily. In terms of assembly, homodimer. Mg(2+) is required as a cofactor.

Its subcellular location is the cytoplasm. The enzyme catalyses a myo-inositol phosphate + H2O = myo-inositol + phosphate. Its pathway is polyol metabolism; myo-inositol biosynthesis; myo-inositol from D-glucose 6-phosphate: step 2/2. In terms of biological role, can use myo-inositol monophosphates, scylloinositol 1,4-diphosphate, glucose-1-phosphate, beta-glycerophosphate, and 2'-AMP as substrates. Has been implicated as the pharmacological target for lithium Li(+) action in brain. In Rattus norvegicus (Rat), this protein is Inositol monophosphatase 2 (Impa2).